The primary structure comprises 85 residues: U4-theraphotoxin-Hhn1p (85 aa).

The signal sequence occupies residues Met-1–Ala-22. The propeptide occupies Glu-23–Arg-48. Cystine bridges form between Cys-52-Cys-66, Cys-56-Cys-77, and Cys-71-Cys-82.

It belongs to the neurotoxin 12 (Hwtx-2) family. 02 (Hwtx-2) subfamily. Expressed by the venom gland.

The protein resides in the secreted. Functionally, postsynaptic neurotoxin. The chain is U4-theraphotoxin-Hhn1p from Cyriopagopus hainanus (Chinese bird spider).